The following is a 189-amino-acid chain: Glycerol-3-phosphate acyltransferase (189 aa).

Helical transmembrane passes span 1–21, 79–99, 113–133, and 151–171; these read MVWL…AILL, QQAW…YFNF, LGLY…VFAF, and LLAW…GVIV.

This sequence belongs to the PlsY family. As to quaternary structure, probably interacts with PlsX.

It is found in the cell inner membrane. The catalysed reaction is an acyl phosphate + sn-glycerol 3-phosphate = a 1-acyl-sn-glycero-3-phosphate + phosphate. Its pathway is lipid metabolism; phospholipid metabolism. Functionally, catalyzes the transfer of an acyl group from acyl-phosphate (acyl-PO(4)) to glycerol-3-phosphate (G3P) to form lysophosphatidic acid (LPA). This enzyme utilizes acyl-phosphate as fatty acyl donor, but not acyl-CoA or acyl-ACP. The sequence is that of Glycerol-3-phosphate acyltransferase from Azotobacter vinelandii (strain DJ / ATCC BAA-1303).